Here is a 2146-residue protein sequence, read N- to C-terminus: Conidial pigment polyketide synthase alb1 (2146 aa).

The N-terminal acylcarrier protein transacylase domain (SAT) stretch occupies residues 8–244; the sequence is YLFGDQTISC…KAPGVSGPYH (237 aa). Positions 375–806 constitute a Ketosynthase family 3 (KS3) domain; the sequence is RSKIAIIGMS…GGNTALLMED (432 aa). Residues Cys-547, His-682, and His-724 each act as for beta-ketoacyl synthase activity in the active site. Residues 911–1232 form a malonyl-CoA:ACP transacylase (MAT) domain region; that stretch reads GFVFTGQGAQ…LSTLHLAGVE (322 aa). The active-site For acyl/malonyl transferase activity is the Ser-1001. The tract at residues 1290-1602 is product template (PT) domain; it reads TTAAQKIVEC…ARKILDTVLP (313 aa). The tract at residues 1294 to 1427 is N-terminal hotdog fold; the sequence is QKIVECREDG…VKLFNCAERE (134 aa). Positions 1294-1598 constitute a PKS/mFAS DH domain; the sequence is QKIVECREDG…FQALARKILD (305 aa). His-1326 (proton acceptor; for dehydratase activity) is an active-site residue. The interval 1453 to 1598 is C-terminal hotdog fold; the sequence is AHRMQRGMVY…FQALARKILD (146 aa). Asp-1511 acts as the Proton donor; for dehydratase activity in catalysis. Positions 1611–1644 are disordered; sequence GAPAPAPARPIGEKKAPPPIKVTGPPKPNPSNAR. The span at 1627-1639 shows a compositional bias: pro residues; the sequence is PPPIKVTGPPKPN. Residues 1647–1721 form the Carrier 1 domain; it reads SPVVARALEI…DFKAYLAEKG (75 aa). Position 1681 is an O-(pantetheine 4'-phosphoryl)serine (Ser-1681). A disordered region spans residues 1724-1769; sequence DSSSPEPSSEPESKFSFNSDASSEASSGLTTPGITSPVKHEAPKGG. Residues 1738–1750 are compositionally biased toward low complexity; the sequence is FSFNSDASSEASS. The 78-residue stretch at 1768 to 1845 folds into the Carrier 2 domain; the sequence is GGQNKVWKSI…AVQAALDLKP (78 aa). Ser-1805 carries the O-(pantetheine 4'-phosphoryl)serine modification. Residues 1892–2019 are claisen cyclase domain; the sequence is KLFMFPDGSG…SIGLFGDGKR (128 aa). Ser-1962 acts as the For Claisen cyclase activity in catalysis.

The protein localises to the endosome. The catalysed reaction is 6 malonyl-CoA + acetyl-CoA + 6 H(+) = naphtopyrone YWA1 + 6 CO2 + 7 CoA + H2O. It participates in pigment biosynthesis; melanin biosynthesis. Its function is as follows. Non-reducing polyketide synthase; part of the gene cluster that mediates the biosynthesis of dihydroxynaphthalene (DHN)-melanin, a bluish-green pigment and a structural component of the conidial wall. The first step of the pathway is the production of the heptaketide naphtopyrone YWA1 by the polyketide synthase alb1 though condensation of acetyl-CoA with malonyl-CoA. The naphtopyrone YWA1 is then converted to the pentaketide 1,3,6,8-tetrahydroxynaphthalene (1,3,6,8-THN) by the heptaketide hydrolyase ayg1 though chain-length shortening. 1,3,6,8-THN is substrate of the hydroxynaphthalene reductase arp2 to yield scytalone. The scytalone dehydratase arp1 then reduces scytalone to 1,3,8-THN. 1,3,8-THN is also substrate of the hydroxynaphthalene reductase arp2 to yield vermelone. Vermelone is further converted by the multicopper oxidase abr1 to 1,8-DHN. Finally the laccase abr2 transforms 1,8-DHN to DHN-melanin. DHN-melanin biosynthesis appears to be initiated in endosomes where early enzymes (abl1, ayg1, arp1 and arp2) localize, with exocytosis leading to melanin deposition on the cell surface where late enzymes (abr1 and abr2) localize. DHN-melanin is an important structural component of the outer cell wall and is required for the presence of conidial surface hydrophobins. DHN-melanin also plays a crucial role in fungal virulence, including a protective role against the host's immune defenses. DHN-melanin protects also conidia against amoeba predation. The protein is Conidial pigment polyketide synthase alb1 of Aspergillus fumigatus (strain ATCC MYA-4609 / CBS 101355 / FGSC A1100 / Af293) (Neosartorya fumigata).